A 468-amino-acid polypeptide reads, in one-letter code: Phosphoglucosamine mutase (468 aa).

Ser-112 serves as the catalytic Phosphoserine intermediate. Mg(2+) is bound by residues Ser-112, Asp-254, Asp-256, and Asp-258. Ser-112 carries the post-translational modification Phosphoserine.

The protein belongs to the phosphohexose mutase family. It depends on Mg(2+) as a cofactor. Post-translationally, activated by phosphorylation.

The enzyme catalyses alpha-D-glucosamine 1-phosphate = D-glucosamine 6-phosphate. Its function is as follows. Catalyzes the conversion of glucosamine-6-phosphate to glucosamine-1-phosphate. The chain is Phosphoglucosamine mutase from Prochlorococcus marinus (strain MIT 9303).